The primary structure comprises 1405 residues: DNA-directed RNA polymerase subunit beta' (1405 aa).

Zn(2+) contacts are provided by Cys-70, Cys-72, Cys-85, and Cys-88. Mg(2+) contacts are provided by Asp-460, Asp-462, and Asp-464. 4 residues coordinate Zn(2+): Cys-814, Cys-888, Cys-895, and Cys-898.

The protein belongs to the RNA polymerase beta' chain family. The RNAP catalytic core consists of 2 alpha, 1 beta, 1 beta' and 1 omega subunit. When a sigma factor is associated with the core the holoenzyme is formed, which can initiate transcription. It depends on Mg(2+) as a cofactor. The cofactor is Zn(2+).

The catalysed reaction is RNA(n) + a ribonucleoside 5'-triphosphate = RNA(n+1) + diphosphate. In terms of biological role, DNA-dependent RNA polymerase catalyzes the transcription of DNA into RNA using the four ribonucleoside triphosphates as substrates. In Shewanella woodyi (strain ATCC 51908 / MS32), this protein is DNA-directed RNA polymerase subunit beta'.